The chain runs to 393 residues: Chalcone synthase G (393 aa).

Cys-164 is a catalytic residue.

This sequence belongs to the thiolase-like superfamily. Chalcone/stilbene synthases family. Expressed in seedlings after illumination with UV light. No expression detectable in flowers. It is not known for sure whether CHSG encodes a chalcone synthase or a very closely related condensing enzyme.

It catalyses the reaction (E)-4-coumaroyl-CoA + 3 malonyl-CoA + 3 H(+) = 2',4,4',6'-tetrahydroxychalcone + 3 CO2 + 4 CoA. Its pathway is secondary metabolite biosynthesis; flavonoid biosynthesis. Functionally, the primary product of this enzyme is 4,2',4',6'-tetrahydroxychalcone (also termed naringenin-chalcone or chalcone) which can under specific conditions spontaneously isomerize into naringenin. The chain is Chalcone synthase G (CHSG) from Petunia hybrida (Petunia).